A 784-amino-acid chain; its full sequence is Protein translocase subunit SecA 2 (784 aa).

Residues glutamine 94, 112–116 (GEGKT), and aspartate 501 contribute to the ATP site.

The protein belongs to the SecA family. As to quaternary structure, monomer and homodimer. Part of the essential Sec protein translocation apparatus which comprises SecA, SecYEG and auxiliary proteins SecDF. Other proteins may also be involved.

It is found in the cell membrane. The protein resides in the cytoplasm. The enzyme catalyses ATP + H2O + cellular proteinSide 1 = ADP + phosphate + cellular proteinSide 2.. Its function is as follows. Part of the Sec protein translocase complex. Interacts with the SecYEG preprotein conducting channel. Has a central role in coupling the hydrolysis of ATP to the transfer of proteins into and across the cell membrane, serving as an ATP-driven molecular motor driving the stepwise translocation of polypeptide chains across the membrane. The sequence is that of Protein translocase subunit SecA 2 from Mycolicibacterium smegmatis (strain ATCC 700084 / mc(2)155) (Mycobacterium smegmatis).